The following is a 191-amino-acid chain: Fe/S biogenesis protein NfuA (191 aa).

The [4Fe-4S] cluster site is built by cysteine 149 and cysteine 152.

The protein belongs to the NfuA family. Homodimer. It depends on [4Fe-4S] cluster as a cofactor.

Involved in iron-sulfur cluster biogenesis. Binds a 4Fe-4S cluster, can transfer this cluster to apoproteins, and thereby intervenes in the maturation of Fe/S proteins. Could also act as a scaffold/chaperone for damaged Fe/S proteins. The sequence is that of Fe/S biogenesis protein NfuA from Citrobacter koseri (strain ATCC BAA-895 / CDC 4225-83 / SGSC4696).